Reading from the N-terminus, the 555-residue chain is Oligo-1,6-glucosidase (555 aa).

D199 serves as the catalytic Nucleophile. The active-site Proton donor is E255.

It belongs to the glycosyl hydrolase 13 family.

It localises to the cytoplasm. It carries out the reaction Hydrolysis of (1-&gt;6)-alpha-D-glucosidic linkages in some oligosaccharides produced from starch and glycogen by alpha-amylase, and in isomaltose.. The protein is Oligo-1,6-glucosidase (malL) of Heyndrickxia coagulans (Weizmannia coagulans).